Here is a 207-residue protein sequence, read N- to C-terminus: Holliday junction branch migration complex subunit RuvA (207 aa).

A domain I region spans residues 1–65 (MYDYIRGILT…ETEHVLYGFS (65 aa)). The interval 66-144 (SRRERECFRM…DLLPLDSKAI (79 aa)) is domain II. The tract at residues 145 to 155 (ASWESVKPSCM) is flexible linker. The segment at 155-207 (MDEGIQALAALGYSKPSAERMIAEAMSELPENASLAEILPIALKKNLQGLNKS) is domain III.

Belongs to the RuvA family. Homotetramer. Forms an RuvA(8)-RuvB(12)-Holliday junction (HJ) complex. HJ DNA is sandwiched between 2 RuvA tetramers; dsDNA enters through RuvA and exits via RuvB. An RuvB hexamer assembles on each DNA strand where it exits the tetramer. Each RuvB hexamer is contacted by two RuvA subunits (via domain III) on 2 adjacent RuvB subunits; this complex drives branch migration. In the full resolvosome a probable DNA-RuvA(4)-RuvB(12)-RuvC(2) complex forms which resolves the HJ.

The protein resides in the cytoplasm. The RuvA-RuvB-RuvC complex processes Holliday junction (HJ) DNA during genetic recombination and DNA repair, while the RuvA-RuvB complex plays an important role in the rescue of blocked DNA replication forks via replication fork reversal (RFR). RuvA specifically binds to HJ cruciform DNA, conferring on it an open structure. The RuvB hexamer acts as an ATP-dependent pump, pulling dsDNA into and through the RuvAB complex. HJ branch migration allows RuvC to scan DNA until it finds its consensus sequence, where it cleaves and resolves the cruciform DNA. This is Holliday junction branch migration complex subunit RuvA from Chlamydia caviae (strain ATCC VR-813 / DSM 19441 / 03DC25 / GPIC) (Chlamydophila caviae).